We begin with the raw amino-acid sequence, 310 residues long: Ribosomal protein uL3 glutamine methyltransferase (310 aa).

Belongs to the protein N5-glutamine methyltransferase family. PrmB subfamily.

The catalysed reaction is L-glutaminyl-[ribosomal protein uL3] + S-adenosyl-L-methionine = N(5)-methyl-L-glutaminyl-[ribosomal protein uL3] + S-adenosyl-L-homocysteine + H(+). In terms of biological role, methylates large ribosomal subunit protein uL3 on a specific glutamine residue. This is Ribosomal protein uL3 glutamine methyltransferase from Vibrio anguillarum (strain ATCC 68554 / 775) (Listonella anguillarum).